The following is a 99-amino-acid chain: Large ribosomal subunit protein uL23 (99 aa).

Belongs to the universal ribosomal protein uL23 family. In terms of assembly, part of the 50S ribosomal subunit. Contacts protein L29, and trigger factor when it is bound to the ribosome.

In terms of biological role, one of the early assembly proteins it binds 23S rRNA. One of the proteins that surrounds the polypeptide exit tunnel on the outside of the ribosome. Forms the main docking site for trigger factor binding to the ribosome. In Shewanella loihica (strain ATCC BAA-1088 / PV-4), this protein is Large ribosomal subunit protein uL23.